Reading from the N-terminus, the 133-residue chain is UPF0768 protein C977.18 (133 aa).

The protein belongs to the UPF0768 family.

In Schizosaccharomyces pombe (strain 972 / ATCC 24843) (Fission yeast), this protein is UPF0768 protein C977.18.